The following is a 317-amino-acid chain: Serpentine receptor class delta-26 (317 aa).

7 consecutive transmembrane segments (helical) span residues 5–25 (LLHT…MYLA), 38–58 (AIIT…FFVM), 83–103 (ACYV…IWMI), 122–142 (SLVF…AAWI), 176–196 (ITLI…YAWI), 227–247 (FQVF…AMFG), and 258–278 (LVSI…ILFV).

The protein belongs to the nematode receptor-like protein srd family.

It is found in the membrane. This is Serpentine receptor class delta-26 (srd-26) from Caenorhabditis elegans.